An 81-amino-acid chain; its full sequence is Albumin-1 (81 aa).

The propeptide occupies 27 to 34 (LSSVAKMI).

Three disulfide bonds are probably present. In terms of processing, the C-terminal glycine may be removed from A1b.

A1b binds to basic 7S globulin (BG) and stimulates its phosphorylation activity. The polypeptide is Albumin-1 (LEG1) (Lupinus angustifolius (Narrow-leaved blue lupine)).